Reading from the N-terminus, the 213-residue chain is Pyridoxine/pyridoxamine 5'-phosphate oxidase (213 aa).

Residues 57 to 62, 77 to 78, R83, K84, and Q106 each bind FMN; these read RIVLLR and FT. R62 serves as a coordination point for substrate. Residues Y124, R128, and S132 each contribute to the substrate site. The segment at 135 to 163 is disordered; sequence GARASDQSRPLPDRKTLQKRVEEEEARYP. An FMN-binding site is contributed by 141 to 142; the sequence is QS. The segment covering 145–163 has biased composition (basic and acidic residues); the sequence is LPDRKTLQKRVEEEEARYP. Position 186 (W186) interacts with FMN. 192 to 194 serves as a coordination point for substrate; the sequence is RLH. R196 lines the FMN pocket.

The protein belongs to the pyridoxamine 5'-phosphate oxidase family. In terms of assembly, homodimer. It depends on FMN as a cofactor.

The enzyme catalyses pyridoxamine 5'-phosphate + O2 + H2O = pyridoxal 5'-phosphate + H2O2 + NH4(+). The catalysed reaction is pyridoxine 5'-phosphate + O2 = pyridoxal 5'-phosphate + H2O2. It participates in cofactor metabolism; pyridoxal 5'-phosphate salvage; pyridoxal 5'-phosphate from pyridoxamine 5'-phosphate: step 1/1. Its pathway is cofactor metabolism; pyridoxal 5'-phosphate salvage; pyridoxal 5'-phosphate from pyridoxine 5'-phosphate: step 1/1. Its function is as follows. Catalyzes the oxidation of either pyridoxine 5'-phosphate (PNP) or pyridoxamine 5'-phosphate (PMP) into pyridoxal 5'-phosphate (PLP). This is Pyridoxine/pyridoxamine 5'-phosphate oxidase from Granulibacter bethesdensis (strain ATCC BAA-1260 / CGDNIH1).